The following is a 322-amino-acid chain: Probable 5-dehydro-4-deoxyglucarate dehydratase 2 (322 aa).

It belongs to the DapA family.

It carries out the reaction 5-dehydro-4-deoxy-D-glucarate + H(+) = 2,5-dioxopentanoate + CO2 + H2O. It participates in carbohydrate acid metabolism; D-glucarate degradation; 2,5-dioxopentanoate from D-glucarate: step 2/2. The chain is Probable 5-dehydro-4-deoxyglucarate dehydratase 2 from Streptomyces coelicolor (strain ATCC BAA-471 / A3(2) / M145).